A 313-amino-acid chain; its full sequence is uncharacterized protein (313 aa).

It to B.subtilis YqxC and T.hyodysenteriae hemolysin TlyA.

This is an uncharacterized protein from Bacillus subtilis (strain 168).